The sequence spans 43 residues: S-layer protein 1 (43 aa).

It is found in the secreted. It localises to the cell wall. The protein resides in the S-layer. Functionally, the S-layer is a paracrystalline mono-layered assembly of proteins which coat the surface of bacteria. This Bacillus thuringiensis subsp. konkukian protein is S-layer protein 1.